A 349-amino-acid polypeptide reads, in one-letter code: Phenylalanine--tRNA ligase alpha subunit (349 aa).

Residue glutamate 259 coordinates Mg(2+).

It belongs to the class-II aminoacyl-tRNA synthetase family. Phe-tRNA synthetase alpha subunit type 1 subfamily. Tetramer of two alpha and two beta subunits. Mg(2+) is required as a cofactor.

It localises to the cytoplasm. The catalysed reaction is tRNA(Phe) + L-phenylalanine + ATP = L-phenylalanyl-tRNA(Phe) + AMP + diphosphate + H(+). The chain is Phenylalanine--tRNA ligase alpha subunit from Lactobacillus acidophilus (strain ATCC 700396 / NCK56 / N2 / NCFM).